A 590-amino-acid polypeptide reads, in one-letter code: Methionine--tRNA ligase, mitochondrial (590 aa).

A mitochondrion-targeting transit peptide spans 1–26 (MRTRFLFLTSGCKAVPELHKIVLANA). Residues 51–61 (FYVNASPHLGH) carry the 'HIGH' region motif. A 'KMSKS' region motif is present at residues 342 to 346 (KMSKS). Lys345 is a binding site for ATP. The segment at 570-590 (LESQRADQQKNRKMEKGSNLK) is disordered. Residues 571–590 (ESQRADQQKNRKMEKGSNLK) are compositionally biased toward basic and acidic residues.

It belongs to the class-I aminoacyl-tRNA synthetase family.

Its subcellular location is the mitochondrion matrix. It carries out the reaction tRNA(Met) + L-methionine + ATP = L-methionyl-tRNA(Met) + AMP + diphosphate. The chain is Methionine--tRNA ligase, mitochondrial (mars2) from Takifugu rubripes (Japanese pufferfish).